We begin with the raw amino-acid sequence, 303 residues long: Acidic endochitinase WIN6.2B (303 aa).

The signal sequence occupies residues 1-21 (MSVWAFAFFSLFLSLSVRGSA). Residues 22–62 (EQCGQQAGDALCPGGLCCSSYGWCGTTADYCGDGCQSQCDG) enclose the Chitin-binding type-1 domain. 4 disulfides stabilise this stretch: cysteine 24-cysteine 39, cysteine 33-cysteine 45, cysteine 38-cysteine 52, and cysteine 56-cysteine 60. The interval 82–303 (DGYLSDIIPE…YGLLGLKDTM (222 aa)) is chitinase. Glutamate 150 functions as the Proton donor in the catalytic mechanism. A disulfide bond links cysteine 253 and cysteine 286.

The protein belongs to the glycosyl hydrolase 19 family. Chitinase class I subfamily.

It carries out the reaction Random endo-hydrolysis of N-acetyl-beta-D-glucosaminide (1-&gt;4)-beta-linkages in chitin and chitodextrins.. Defense against chitin-containing fungal pathogens. The polypeptide is Acidic endochitinase WIN6.2B (Populus trichocarpa (Western balsam poplar)).